We begin with the raw amino-acid sequence, 243 residues long: Zinc import ATP-binding protein ZnuC (243 aa).

Residues 8 to 225 (LNLSNVSYYI…SEFQKLFGHH (218 aa)) enclose the ABC transporter domain. Residue 40–47 (GPNGAGKS) participates in ATP binding.

The protein belongs to the ABC transporter superfamily. Zinc importer (TC 3.A.1.15.5) family. The complex is composed of two ATP-binding proteins (ZnuC), two transmembrane proteins (ZnuB) and a solute-binding protein (ZnuA).

It is found in the cell inner membrane. The enzyme catalyses Zn(2+)(out) + ATP(in) + H2O(in) = Zn(2+)(in) + ADP(in) + phosphate(in) + H(+)(in). In terms of biological role, part of the ABC transporter complex ZnuABC involved in zinc import. Responsible for energy coupling to the transport system. The sequence is that of Zinc import ATP-binding protein ZnuC from Psychrobacter cryohalolentis (strain ATCC BAA-1226 / DSM 17306 / VKM B-2378 / K5).